We begin with the raw amino-acid sequence, 262 residues long: MEASQDTFTVAGRTFQSRLLVGTGKYRDLDETREAIEVSGAEIVTVAIRRTNIGQNPDEPNLLDVISPERYTLLPNTAGCYTAKDAVRTCRLARELLDGHNLVKLEVLGDEKTLYPDIPATLEAAEQLVADGFDVMVYTSDDPITAKRLEEVGCVAVMPLGAPIGSGLGIQNHWNILTIVENASVPVLVDAGVGTASDASEAMELGCDGVLMNTAIAGAQRPVLMASAMRKAVEAGREAYLAGRIPRKRFASASSPLEGTFF.

Lysine 104 serves as the catalytic Schiff-base intermediate with DXP. Residues glycine 165, 191–192 (AG), and 213–214 (NT) contribute to the 1-deoxy-D-xylulose 5-phosphate site.

Belongs to the ThiG family. Homotetramer. Forms heterodimers with either ThiH or ThiS.

It localises to the cytoplasm. It catalyses the reaction [ThiS sulfur-carrier protein]-C-terminal-Gly-aminoethanethioate + 2-iminoacetate + 1-deoxy-D-xylulose 5-phosphate = [ThiS sulfur-carrier protein]-C-terminal Gly-Gly + 2-[(2R,5Z)-2-carboxy-4-methylthiazol-5(2H)-ylidene]ethyl phosphate + 2 H2O + H(+). The protein operates within cofactor biosynthesis; thiamine diphosphate biosynthesis. Catalyzes the rearrangement of 1-deoxy-D-xylulose 5-phosphate (DXP) to produce the thiazole phosphate moiety of thiamine. Sulfur is provided by the thiocarboxylate moiety of the carrier protein ThiS. In vitro, sulfur can be provided by H(2)S. The chain is Thiazole synthase from Alkalilimnicola ehrlichii (strain ATCC BAA-1101 / DSM 17681 / MLHE-1).